We begin with the raw amino-acid sequence, 424 residues long: Serine--tRNA ligase (424 aa).

231–233 (TAE) lines the L-serine pocket. 262–264 (RSE) is a binding site for ATP. Residue E285 coordinates L-serine. 349–352 (EISS) is an ATP binding site. S385 is an L-serine binding site.

This sequence belongs to the class-II aminoacyl-tRNA synthetase family. Type-1 seryl-tRNA synthetase subfamily. In terms of assembly, homodimer. The tRNA molecule binds across the dimer.

Its subcellular location is the cytoplasm. It catalyses the reaction tRNA(Ser) + L-serine + ATP = L-seryl-tRNA(Ser) + AMP + diphosphate + H(+). It carries out the reaction tRNA(Sec) + L-serine + ATP = L-seryl-tRNA(Sec) + AMP + diphosphate + H(+). It functions in the pathway aminoacyl-tRNA biosynthesis; selenocysteinyl-tRNA(Sec) biosynthesis; L-seryl-tRNA(Sec) from L-serine and tRNA(Sec): step 1/1. Functionally, catalyzes the attachment of serine to tRNA(Ser). Is also able to aminoacylate tRNA(Sec) with serine, to form the misacylated tRNA L-seryl-tRNA(Sec), which will be further converted into selenocysteinyl-tRNA(Sec). The sequence is that of Serine--tRNA ligase from Bacillus cereus (strain ATCC 10987 / NRS 248).